Here is a 406-residue protein sequence, read N- to C-terminus: Succinylornithine transaminase/acetylornithine aminotransferase (406 aa).

Pyridoxal 5'-phosphate is bound by residues 108–109 (GA) and Phe141. Arg144 provides a ligand contact to N(2)-acetyl-L-ornithine. 226–229 (DEVQ) serves as a coordination point for pyridoxal 5'-phosphate. Lys255 is modified (N6-(pyridoxal phosphate)lysine). Thr283 is a N(2)-acetyl-L-ornithine binding site. Thr284 is a pyridoxal 5'-phosphate binding site.

Belongs to the class-III pyridoxal-phosphate-dependent aminotransferase family. ArgD subfamily. As to quaternary structure, homodimer. Requires pyridoxal 5'-phosphate as cofactor.

Its subcellular location is the cytoplasm. The enzyme catalyses N(2)-succinyl-L-ornithine + 2-oxoglutarate = N-succinyl-L-glutamate 5-semialdehyde + L-glutamate. It carries out the reaction N(2)-acetyl-L-ornithine + 2-oxoglutarate = N-acetyl-L-glutamate 5-semialdehyde + L-glutamate. The protein operates within amino-acid biosynthesis; L-arginine biosynthesis; N(2)-acetyl-L-ornithine from L-glutamate: step 4/4. It functions in the pathway amino-acid degradation; L-arginine degradation via AST pathway; L-glutamate and succinate from L-arginine: step 3/5. Transaminates both N(2)-acetylornithine and N(2)-succinylornithine. The chain is Succinylornithine transaminase/acetylornithine aminotransferase (aruC) from Pseudomonas aeruginosa (strain ATCC 15692 / DSM 22644 / CIP 104116 / JCM 14847 / LMG 12228 / 1C / PRS 101 / PAO1).